Here is a 302-residue protein sequence, read N- to C-terminus: Beta-casein (302 aa).

Positions 1–15 (MKLLILTCLVALGFA) are cleaved as a signal peptide. Residues Ser-23 and Ser-25 each carry the phosphoserine modification. 16 repeat units span residues 144–151 (KREMLPIY), 152–159 (ERERLPAH), 160–167 (KRESLLAH), 168–175 (ERESLLAH), 176–182 (ERDILVP), 183–190 (QREMSFVP), 191–198 (EREFLFAS), 199–204 (ERVVLP), 205–214 (EQEKEILHND), 215–222 (EREVLAVH), 223–230 (KKEILPPF), 231–238 (EKEKVLPL), 241–247 (HRVVPLP), 248–255 (QREIVPPF), 256–262 (QRETLLP), and 263–269 (EEILPVN). The tract at residues 144–269 (KREMLPIYER…LLPEEILPVN (126 aa)) is 16 X approximate tandem repeats.

This sequence belongs to the beta-casein family. Mammary gland specific. Secreted in milk.

The protein resides in the secreted. Its function is as follows. Important role in determination of the surface properties of the casein micelles. The polypeptide is Beta-casein (CSN2) (Notamacropus eugenii (Tammar wallaby)).